Consider the following 429-residue polypeptide: Adenylosuccinate synthetase (429 aa).

GTP contacts are provided by residues 12 to 18 (GDEGKGK) and 40 to 42 (GHT). Catalysis depends on D13, which acts as the Proton acceptor. Mg(2+) contacts are provided by D13 and G40. IMP-binding positions include 13 to 16 (DEGK), 38 to 41 (NAGH), T128, R142, Q223, T238, and R302. Catalysis depends on H41, which acts as the Proton donor. Residue 298–304 (VNTGRKR) participates in substrate binding. GTP-binding positions include R304, 330-332 (KLD), and 412-414 (GVG).

Belongs to the adenylosuccinate synthetase family. In terms of assembly, homodimer. Mg(2+) serves as cofactor.

It localises to the cytoplasm. The enzyme catalyses IMP + L-aspartate + GTP = N(6)-(1,2-dicarboxyethyl)-AMP + GDP + phosphate + 2 H(+). It participates in purine metabolism; AMP biosynthesis via de novo pathway; AMP from IMP: step 1/2. Plays an important role in the de novo pathway of purine nucleotide biosynthesis. Catalyzes the first committed step in the biosynthesis of AMP from IMP. This is Adenylosuccinate synthetase from Corynebacterium diphtheriae (strain ATCC 700971 / NCTC 13129 / Biotype gravis).